The primary structure comprises 274 residues: Kit ligand (274 aa).

An N-terminal signal peptide occupies residues 1-25 (MKKTQTWIITCIYLQLLLFNPLVKT). Residues 26 to 215 (KGICGKRVTD…SNSIGDSNLQ (190 aa)) are Extracellular-facing. Cystine bridges form between C29–C114 and C68–C164. N90, N97, N145, and N196 each carry an N-linked (GlcNAc...) asparagine glycan. A helical transmembrane segment spans residues 216-238 (WAAMALPAFFSLVIGFAFGALYW). Residues 239 to 274 (KKKQPNLTRTVENIQINEEDNEISMLQEKEREFQEV) are Cytoplasmic-facing.

This sequence belongs to the SCF family. In terms of assembly, homodimer, non-covalently linked. Post-translationally, a soluble form is produced by proteolytic processing of the extracellular domain.

It localises to the cytoplasm. The protein resides in the cytoskeleton. Its subcellular location is the cell membrane. The protein localises to the cell projection. It is found in the lamellipodium. It localises to the filopodium. The protein resides in the secreted. Its function is as follows. Stimulates the proliferation of mast cells. Able to augment the proliferation of both myeloid and lymphoid hematopoietic progenitors in bone marrow culture. Also mediates cell-cell adhesion. Acts synergistically with other cytokines, probably interleukins. The polypeptide is Kit ligand (KITLG) (Canis lupus familiaris (Dog)).